We begin with the raw amino-acid sequence, 98 residues long: MEITDVRLRRVHTEGRMRAIASITMDHEFVVHDIRVIDGNNGLFVAMPSKRTPDGEFRDIAHPISSKTREKIQIAVINEYERVGEYEDAPNYEEAGAS.

Belongs to the SpoVG family.

Essential for sporulation. Interferes with or is a negative regulator of the pathway leading to asymmetric septation. This chain is Putative septation protein SpoVG, found in Shouchella clausii (strain KSM-K16) (Alkalihalobacillus clausii).